A 413-amino-acid chain; its full sequence is Transforming growth factor beta-2 proprotein (413 aa).

An N-terminal signal peptide occupies residues 1–19; it reads MHYYVLFTFLTLDLAPVAL. 3 N-linked (GlcNAc...) asparagine glycosylation sites follow: Asn72, Asn140, and Asn241. Intrachain disulfides connect Cys308/Cys317, Cys316/Cys379, Cys345/Cys410, and Cys349/Cys412.

It belongs to the TGF-beta family. As to quaternary structure, interacts with Transforming growth factor beta-2 (TGF-beta-2) chain; interaction is non-covalent and maintains (TGF-beta-2) in a latent state. In terms of assembly, homodimer; disulfide-linked. Interacts with TGF-beta receptors (tgfbr1 and tgfbr2), leading to signal transduction. In terms of processing, the precursor proprotein is cleaved in the Golgi apparatus to form Transforming growth factor beta-2 (TGF-beta-2) and Latency-associated peptide (LAP) chains, which remain non-covalently linked, rendering TGF-beta-2 inactive.

The protein localises to the secreted. It localises to the extracellular space. The protein resides in the extracellular matrix. Functionally, precursor of the Latency-associated peptide (LAP) and Transforming growth factor beta-2 (TGF-beta-2) chains, which constitute the regulatory and active subunit of TGF-beta-2, respectively. In terms of biological role, required to maintain the Transforming growth factor beta-2 (TGF-beta-2) chain in a latent state during storage in extracellular matrix. Associates non-covalently with TGF-beta-2 and regulates its activation via interaction with 'milieu molecules', such as ltbp1 and lrrc32/garp, that control activation of TGF-beta-2. Its function is as follows. Multifunctional protein that regulates various processes such as angiogenesis and heart development. Activation into mature form follows different steps: following cleavage of the proprotein in the Golgi apparatus, Latency-associated peptide (LAP) and Transforming growth factor beta-2 (TGF-beta-2) chains remain non-covalently linked rendering TGF-beta-2 inactive during storage in extracellular matrix. At the same time, LAP chain interacts with 'milieu molecules', such as ltbp1 and lrrc32/garp, that control activation of TGF-beta-2 and maintain it in a latent state during storage in extracellular milieus. Once activated following release of LAP, TGF-beta-2 acts by binding to TGF-beta receptors (tgfbr1 and tgfbr2), which transduce signal. The polypeptide is Transforming growth factor beta-2 proprotein (tgfb2) (Xenopus laevis (African clawed frog)).